A 55-amino-acid polypeptide reads, in one-letter code: U-reduvitoxin-Pr2a (55 aa).

An N-terminal signal peptide occupies residues 1–21 (MMKFLLVLFLITITLITMAYS). 3 cysteine pairs are disulfide-bonded: Cys-26-Cys-41, Cys-33-Cys-46, and Cys-40-Cys-51.

It belongs to the venom Ptu1-like knottin family. As to expression, expressed by the venom gland (posterior main gland) (at protein level).

It is found in the secreted. In terms of biological role, binds reversibly and blocks P/Q-type voltage-gated calcium channels (Cav). The protein is U-reduvitoxin-Pr2a of Platymeris rhadamanthus (Red spot assassin bug).